Consider the following 283-residue polypeptide: Release factor glutamine methyltransferase (283 aa).

S-adenosyl-L-methionine-binding positions include 121–125, Asp-144, and Asn-188; that span reads GTGSG. 188-191 contacts substrate; it reads NPPY.

This sequence belongs to the protein N5-glutamine methyltransferase family. PrmC subfamily.

It carries out the reaction L-glutaminyl-[peptide chain release factor] + S-adenosyl-L-methionine = N(5)-methyl-L-glutaminyl-[peptide chain release factor] + S-adenosyl-L-homocysteine + H(+). In terms of biological role, methylates the class 1 translation termination release factors RF1/PrfA and RF2/PrfB on the glutamine residue of the universally conserved GGQ motif. The sequence is that of Release factor glutamine methyltransferase from Bacillus cereus (strain ATCC 14579 / DSM 31 / CCUG 7414 / JCM 2152 / NBRC 15305 / NCIMB 9373 / NCTC 2599 / NRRL B-3711).